The chain runs to 702 residues: Elongation factor G (702 aa).

A tr-type G domain is found at 8–290 (TRYRNIGISA…AVIEYLPAPT (283 aa)). GTP is bound by residues 17–24 (AHIDAGKT), 88–92 (DTPGH), and 142–145 (NKMD).

Belongs to the TRAFAC class translation factor GTPase superfamily. Classic translation factor GTPase family. EF-G/EF-2 subfamily.

The protein localises to the cytoplasm. Catalyzes the GTP-dependent ribosomal translocation step during translation elongation. During this step, the ribosome changes from the pre-translocational (PRE) to the post-translocational (POST) state as the newly formed A-site-bound peptidyl-tRNA and P-site-bound deacylated tRNA move to the P and E sites, respectively. Catalyzes the coordinated movement of the two tRNA molecules, the mRNA and conformational changes in the ribosome. The chain is Elongation factor G from Erwinia tasmaniensis (strain DSM 17950 / CFBP 7177 / CIP 109463 / NCPPB 4357 / Et1/99).